Reading from the N-terminus, the 129-residue chain is Large ribosomal subunit protein bL19c (129 aa).

The protein belongs to the bacterial ribosomal protein bL19 family.

It localises to the plastid. The sequence is that of Large ribosomal subunit protein bL19c from Prototheca wickerhamii.